An 807-amino-acid chain; its full sequence is Glycerol-3-phosphate acyltransferase (807 aa).

An HXXXXD motif motif is present at residues 308–313; it reads CHRSHM.

Belongs to the GPAT/DAPAT family.

The protein localises to the cell inner membrane. It catalyses the reaction sn-glycerol 3-phosphate + an acyl-CoA = a 1-acyl-sn-glycero-3-phosphate + CoA. It participates in phospholipid metabolism; CDP-diacylglycerol biosynthesis; CDP-diacylglycerol from sn-glycerol 3-phosphate: step 1/3. This is Glycerol-3-phosphate acyltransferase from Shewanella loihica (strain ATCC BAA-1088 / PV-4).